The following is a 347-amino-acid chain: UPF0284 protein M1425_0030 (347 aa).

It belongs to the UPF0284 family.

The sequence is that of UPF0284 protein M1425_0030 from Saccharolobus islandicus (strain M.14.25 / Kamchatka #1) (Sulfolobus islandicus).